The sequence spans 102 residues: uncharacterized protein (102 aa).

This is an uncharacterized protein from Escherichia coli (strain K12).